A 289-amino-acid polypeptide reads, in one-letter code: Shikimate kinase (289 aa).

Residue P84 to A94 coordinates ATP.

Belongs to the GHMP kinase family. Archaeal shikimate kinase subfamily.

Its subcellular location is the cytoplasm. The enzyme catalyses shikimate + ATP = 3-phosphoshikimate + ADP + H(+). It functions in the pathway metabolic intermediate biosynthesis; chorismate biosynthesis; chorismate from D-erythrose 4-phosphate and phosphoenolpyruvate: step 5/7. The sequence is that of Shikimate kinase (aroK) from Methanothermobacter thermautotrophicus (strain ATCC 29096 / DSM 1053 / JCM 10044 / NBRC 100330 / Delta H) (Methanobacterium thermoautotrophicum).